The following is a 273-amino-acid chain: MAATTLYNSCLLQPKYGFTTRRLNQSLVNSLTNPTRVSVLWKSRRDVIAKASIEMAESNSISSVVVNSSGPIIVIDNYDSFTYNLCQYMGELGCHFEVYRNDELTVEELKRKKPRGLLISPGPGTPQDSGISLQTVLELGPLVPLFGVCMGLQCIGEAFGGKIVRSPFGVMHGKSSMVHYDEKGEEGLFSGLSNPFLVGRYHSLVIEKDSFPSDELEVTAWTEDGLVMAARHRKYKHIQGVQFHPESIITTEGKTIVRNFIKLVEKKESEKLA.

Residues 1–36 (MAATTLYNSCLLQPKYGFTTRRLNQSLVNSLTNPTR) constitute a chloroplast transit peptide. A Glutamine amidotransferase type-1 domain is found at 71–270 (PIIVIDNYDS…IKLVEKKESE (200 aa)). Cysteine 149 (nucleophile) is an active-site residue. Residues histidine 244 and glutamate 246 contribute to the active site.

As to quaternary structure, heterotetramer consisting of two non-identical subunits: a beta subunit and a large alpha subunit.

It is found in the plastid. It localises to the chloroplast. The catalysed reaction is chorismate + L-glutamine = anthranilate + pyruvate + L-glutamate + H(+). It functions in the pathway amino-acid biosynthesis; L-tryptophan biosynthesis; L-tryptophan from chorismate: step 1/5. With respect to regulation, feedback inhibition by tryptophan. Part of a heterotetrameric complex that catalyzes the two-step biosynthesis of anthranilate, an intermediate in the biosynthesis of L-tryptophan. In the first step, the glutamine-binding beta subunit of anthranilate synthase (AS) provides the glutamine amidotransferase activity which generates ammonia as a substrate that, along with chorismate, is used in the second step, catalyzed by the large alpha subunit of AS to produce anthranilate. In Arabidopsis thaliana (Mouse-ear cress), this protein is Anthranilate synthase beta subunit 2, chloroplastic (ASB2).